Consider the following 312-residue polypeptide: tRNA pseudouridine synthase B (312 aa).

The active-site Nucleophile is the Asp48.

It belongs to the pseudouridine synthase TruB family. Type 1 subfamily.

It catalyses the reaction uridine(55) in tRNA = pseudouridine(55) in tRNA. Functionally, responsible for synthesis of pseudouridine from uracil-55 in the psi GC loop of transfer RNAs. This Haemophilus influenzae (strain ATCC 51907 / DSM 11121 / KW20 / Rd) protein is tRNA pseudouridine synthase B.